Consider the following 208-residue polypeptide: N-(5'-phosphoribosyl)anthranilate isomerase (208 aa).

This sequence belongs to the TrpF family.

It catalyses the reaction N-(5-phospho-beta-D-ribosyl)anthranilate = 1-(2-carboxyphenylamino)-1-deoxy-D-ribulose 5-phosphate. The protein operates within amino-acid biosynthesis; L-tryptophan biosynthesis; L-tryptophan from chorismate: step 3/5. The sequence is that of N-(5'-phosphoribosyl)anthranilate isomerase from Pyrococcus furiosus (strain ATCC 43587 / DSM 3638 / JCM 8422 / Vc1).